The sequence spans 714 residues: Phosphoribosylformylglycinamidine synthase subunit PurL (714 aa).

Residue His34 is part of the active site. ATP is bound at residue Tyr37. Residue Glu78 participates in Mg(2+) binding. Substrate-binding positions include 79-82 and Arg101; that span reads SHNH. His80 functions as the Proton acceptor in the catalytic mechanism. Asp102 lines the Mg(2+) pocket. Gln226 provides a ligand contact to substrate. Asp254 contributes to the Mg(2+) binding site. 298–300 is a substrate binding site; the sequence is ESQ. ATP contacts are provided by Asp474 and Gly511. Asn512 provides a ligand contact to Mg(2+). Ser514 contributes to the substrate binding site.

The protein belongs to the FGAMS family. As to quaternary structure, monomer. Part of the FGAM synthase complex composed of 1 PurL, 1 PurQ and 2 PurS subunits.

It localises to the cytoplasm. The enzyme catalyses N(2)-formyl-N(1)-(5-phospho-beta-D-ribosyl)glycinamide + L-glutamine + ATP + H2O = 2-formamido-N(1)-(5-O-phospho-beta-D-ribosyl)acetamidine + L-glutamate + ADP + phosphate + H(+). It functions in the pathway purine metabolism; IMP biosynthesis via de novo pathway; 5-amino-1-(5-phospho-D-ribosyl)imidazole from N(2)-formyl-N(1)-(5-phospho-D-ribosyl)glycinamide: step 1/2. Part of the phosphoribosylformylglycinamidine synthase complex involved in the purines biosynthetic pathway. Catalyzes the ATP-dependent conversion of formylglycinamide ribonucleotide (FGAR) and glutamine to yield formylglycinamidine ribonucleotide (FGAM) and glutamate. The FGAM synthase complex is composed of three subunits. PurQ produces an ammonia molecule by converting glutamine to glutamate. PurL transfers the ammonia molecule to FGAR to form FGAM in an ATP-dependent manner. PurS interacts with PurQ and PurL and is thought to assist in the transfer of the ammonia molecule from PurQ to PurL. In Methanothermobacter marburgensis (strain ATCC BAA-927 / DSM 2133 / JCM 14651 / NBRC 100331 / OCM 82 / Marburg) (Methanobacterium thermoautotrophicum), this protein is Phosphoribosylformylglycinamidine synthase subunit PurL.